Consider the following 311-residue polypeptide: Ceroid-lipofuscinosis neuronal protein 6 (311 aa).

Transmembrane regions (helical) follow at residues 56-76, 81-101, 111-131, 179-199, 204-224, 225-245, and 260-280; these read WVLDFGRPIAMLVFPLEWFPL, VGDYFHMAYNVITPFLLLKLI, SITYVSIIIFIMGASIHLVGD, CMWYIPFFLILFMYFSGCFTA, SLIPGPALLLVAPSGLYYWYL, VTEGQIFILFIFTFFAMLALV, and LFLFSSFALTLLLVALWVAWL.

Interacts with CRMP2. Interacts with CLN5. Interacts with CLN3.

Its subcellular location is the endoplasmic reticulum membrane. The protein localises to the endoplasmic reticulum. The chain is Ceroid-lipofuscinosis neuronal protein 6 (CLN6) from Homo sapiens (Human).